The following is a 144-amino-acid chain: Bacilliredoxin BH1716 (144 aa).

This sequence belongs to the bacilliredoxin family.

The sequence is that of Bacilliredoxin BH1716 from Halalkalibacterium halodurans (strain ATCC BAA-125 / DSM 18197 / FERM 7344 / JCM 9153 / C-125) (Bacillus halodurans).